The following is a 161-amino-acid chain: Prs ADP-ribosylating toxin (161 aa).

This sequence belongs to the MbcT/ParT/Res family. In terms of assembly, homodimer, forms heterotetrameric ParS(2)-ParT(2) complexes. Post-translationally, consumes NAD(+) and auto-ADP-ribosylates on the tryptic fragment Ala-47-Arg-66 in vitro. Also auto-ADP-ribosylates using NADP(+).

In terms of biological role, toxic component of a type II toxin-antitoxin (TA) system. Expression in E.coli inhibits cell growth; bacteriostasis is neutralized by expression of cognate antitoxin ParS. ADP-ribosylates E.coli ribose-phosphate pyrophosphokinase (RPPK, prs) using NAD(+) in vitro; ADP-ribosylates RPPK on 'Lys-182' and 'Ser-202'. Cannot use NADP(+). Also auto-ADP-ribosylates in vitro; in the presence of RPPK auto-ADP-ribosylation decreases. The polypeptide is Prs ADP-ribosylating toxin (Sphingobium sp. (strain YBL2)).